Consider the following 567-residue polypeptide: Cytochrome P450 monooxygenase 79 (567 aa).

A helical transmembrane segment spans residues 7 to 24 (ELAILAIVLLVTAVVFYT). Residues Asn223 and Asn279 are each glycosylated (N-linked (GlcNAc...) asparagine). Position 475 (Cys475) interacts with heme.

This sequence belongs to the cytochrome P450 family. The cofactor is heme.

It is found in the membrane. It participates in secondary metabolite biosynthesis. Cytochrome P450 monooxygenase that is able to use dehydroabietic acid as a substrate for oxidation. The polypeptide is Cytochrome P450 monooxygenase 79 (Postia placenta (strain ATCC 44394 / Madison 698-R) (Brown rot fungus)).